The following is a 149-amino-acid chain: Calmodulin (149 aa).

The residue at position 2 (Ala-2) is an N-acetylalanine. 4 EF-hand domains span residues 8–43 (EQIA…LGQN), 44–79 (PTEA…KMKD), 81–116 (DSEE…LGEK), and 117–149 (LTDE…MTAK). Asp-21, Asp-23, Asp-25, Thr-27, Glu-32, Asp-57, Asp-59, Asn-61, Thr-63, Glu-68, Asp-94, Asp-96, Asn-98, Tyr-100, and Glu-105 together coordinate Ca(2+). Lys-116 is modified (N6,N6,N6-trimethyllysine). Residues Asp-130, Asp-132, Asp-134, Gln-136, and Glu-141 each coordinate Ca(2+).

This sequence belongs to the calmodulin family.

Calmodulin acts as part of a calcium signal transduction pathway by mediating the control of a large number of enzymes, ion channels, aquaporins and other proteins through calcium-binding. Calcium-binding is required for the activation of calmodulin. Among the enzymes to be stimulated by the calmodulin-calcium complex are a number of protein kinases, such as myosin light-chain kinases and calmodulin-dependent protein kinase type II (CaMK2), and phosphatases. In Electrophorus electricus (Electric eel), this protein is Calmodulin (calm).